The chain runs to 627 residues: DEAD-box ATP-dependent RNA helicase 35A (627 aa).

Low complexity-rich tracts occupy residues 1-15 and 52-61; these read MAAA…AAAA and SSSAAEAASD. Disordered stretches follow at residues 1-23 and 40-85; these read MAAA…EDNY and LRRL…LEAS. The segment covering 62 to 72 has biased composition (pro residues); that stretch reads LPPPPPPPPNQ. Positions 182–210 match the Q motif motif; sequence RDFRDLRLPEPMLRKLREKGIVQPTPIQV. One can recognise a Helicase ATP-binding domain in the interval 213 to 397; that stretch reads LPVVLSGRDM…KSALVKPVIV (185 aa). 226 to 233 serves as a coordination point for ATP; that stretch reads AFTGSGKT. Residues 345-348 carry the DEAD box motif; the sequence is DEAD. Residues 408-568 form the Helicase C-terminal domain; the sequence is DVIQEVEYVK…RIPPVLAELN (161 aa). The CCHC-type zinc finger occupies 584 to 601; the sequence is KGCAYCGGLGHRVTDCPK.

The protein belongs to the DEAD box helicase family. DDX41 subfamily.

The catalysed reaction is ATP + H2O = ADP + phosphate + H(+). The chain is DEAD-box ATP-dependent RNA helicase 35A from Oryza sativa subsp. japonica (Rice).